The following is a 145-amino-acid chain: Cytochrome b (145 aa).

The helical transmembrane segment at 38 to 58 threads the bilayer; sequence FFALHFLLPFVLAALALMHLI. 2 residues coordinate heme b: His42 and His56. An a ubiquinone-binding site is contributed by His61. A helical transmembrane segment spans residues 85 to 105; that stretch reads FIFKDLVTIFIFFIVLSIFVF.

This sequence belongs to the cytochrome b family. Fungal cytochrome b-c1 complex contains 10 subunits; 3 respiratory subunits, 2 core proteins and 5 low-molecular weight proteins. Cytochrome b-c1 complex is a homodimer. The cofactor is heme b.

Its subcellular location is the mitochondrion inner membrane. In terms of biological role, component of the ubiquinol-cytochrome c reductase complex (complex III or cytochrome b-c1 complex) that is part of the mitochondrial respiratory chain. The b-c1 complex mediates electron transfer from ubiquinol to cytochrome c. Contributes to the generation of a proton gradient across the mitochondrial membrane that is then used for ATP synthesis. In Aspergillus flavus, this protein is Cytochrome b (cob).